The chain runs to 367 residues: tRNA-specific 2-thiouridylase MnmA (367 aa).

Residues Gly13–Ser20 and Met39 each bind ATP. Positions Asn99–Asp101 are interaction with target base in tRNA. Cys104 acts as the Nucleophile in catalysis. A disulfide bridge connects residues Cys104 and Cys200. Gly128 is a binding site for ATP. The interval Lys150–Gln152 is interaction with tRNA. Cys200 (cysteine persulfide intermediate) is an active-site residue. The segment at Arg307 to Tyr308 is interaction with tRNA.

This sequence belongs to the MnmA/TRMU family.

It localises to the cytoplasm. The catalysed reaction is S-sulfanyl-L-cysteinyl-[protein] + uridine(34) in tRNA + AH2 + ATP = 2-thiouridine(34) in tRNA + L-cysteinyl-[protein] + A + AMP + diphosphate + H(+). Functionally, catalyzes the 2-thiolation of uridine at the wobble position (U34) of tRNA, leading to the formation of s(2)U34. In Neisseria meningitidis serogroup C (strain 053442), this protein is tRNA-specific 2-thiouridylase MnmA.